The sequence spans 68 residues: Neuronal regeneration-related protein (68 aa).

The segment at 42 to 68 is disordered; that stretch reads EETGAASLTPPGSREFTSPATSYLHPF.

Interacts with FLNA. Interacts with the latency-associated peptides (LAP) of TGFB1 and TGFB2; the interaction results in a decrease in TGFB autoinduction. Phosphorylated on Ser-59. Phosphorylation decreases stability and activity. Expressed in brain and fetal lung.

It localises to the cytoplasm. May have roles in cellular differentiation. Ectopic expression induces differentiation of fibroblast into myofibroblast and myofibroblast ameboid migration. Increases retinoic-acid regulation of lipid-droplet biogenesis. May also have neural functions. Promotes axonal regeneration and augments motility of gliomas. Down-regulates the expression of TGFB1 and TGFB2 but not of TGFB3. May play a role in the regulation of alveolar generation. The polypeptide is Neuronal regeneration-related protein (Nrep) (Mus musculus (Mouse)).